The sequence spans 83 residues: Apolipoprotein C-I, basic form (83 aa).

The signal sequence occupies residues 1 to 26 (MRLFLSLPVLVVVLSMVLEGPAPAQG).

Belongs to the apolipoprotein C1 family.

The protein localises to the secreted. Its function is as follows. Inhibitor of lipoprotein binding to the low density lipoprotein (LDL) receptor, LDL receptor-related protein, and very low density lipoprotein (VLDL) receptor. Associates with high density lipoproteins (HDL) and the triacylglycerol-rich lipoproteins in the plasma and makes up about 10% of the protein of the VLDL and 2% of that of HDL. Appears to interfere directly with fatty acid uptake and is also the major plasma inhibitor of cholesteryl ester transfer protein (CETP). Binds free fatty acids and reduces their intracellular esterification. Modulates the interaction of APOE with beta-migrating VLDL and inhibits binding of beta-VLDL to the LDL receptor-related protein. This is Apolipoprotein C-I, basic form (APOC1B) from Colobus guereza (Mantled guereza).